Consider the following 177-residue polypeptide: Putative fimbrin-like protein FimI (177 aa).

An N-terminal signal peptide occupies residues Met1–Ala19. The cysteines at positions 40 and 81 are disulfide-linked.

The protein belongs to the fimbrial protein family.

The protein resides in the fimbrium. The polypeptide is Putative fimbrin-like protein FimI (fimI) (Salmonella typhi).